We begin with the raw amino-acid sequence, 346 residues long: Elongation factor Ts (346 aa).

Residues Thr-80–Val-83 form an involved in Mg(2+) ion dislocation from EF-Tu region.

This sequence belongs to the EF-Ts family.

It localises to the cytoplasm. Its function is as follows. Associates with the EF-Tu.GDP complex and induces the exchange of GDP to GTP. It remains bound to the aminoacyl-tRNA.EF-Tu.GTP complex up to the GTP hydrolysis stage on the ribosome. The chain is Elongation factor Ts from Streptococcus pneumoniae serotype 19F (strain G54).